The chain runs to 209 residues: Large ribosomal subunit protein uL3 (209 aa).

Positions 141–164 (RAVGSMGGSSDPSRTFKSKKMPGH) are disordered.

Belongs to the universal ribosomal protein uL3 family. In terms of assembly, part of the 50S ribosomal subunit. Forms a cluster with proteins L14 and L19.

One of the primary rRNA binding proteins, it binds directly near the 3'-end of the 23S rRNA, where it nucleates assembly of the 50S subunit. The polypeptide is Large ribosomal subunit protein uL3 (Clostridium acetobutylicum (strain ATCC 824 / DSM 792 / JCM 1419 / IAM 19013 / LMG 5710 / NBRC 13948 / NRRL B-527 / VKM B-1787 / 2291 / W)).